The sequence spans 386 residues: Ferrochelatase (386 aa).

His196 and Glu277 together coordinate Fe cation.

It belongs to the ferrochelatase family.

The protein localises to the cytoplasm. It catalyses the reaction heme b + 2 H(+) = protoporphyrin IX + Fe(2+). It participates in porphyrin-containing compound metabolism; protoheme biosynthesis; protoheme from protoporphyrin-IX: step 1/1. Its function is as follows. Catalyzes the ferrous insertion into protoporphyrin IX. The polypeptide is Ferrochelatase (Picosynechococcus sp. (strain ATCC 27264 / PCC 7002 / PR-6) (Agmenellum quadruplicatum)).